The following is a 443-amino-acid chain: Glutamate-1-semialdehyde 2,1-aminomutase (443 aa).

Residue K272 is modified to N6-(pyridoxal phosphate)lysine.

Belongs to the class-III pyridoxal-phosphate-dependent aminotransferase family. HemL subfamily. In terms of assembly, homodimer. Pyridoxal 5'-phosphate is required as a cofactor.

The protein resides in the cytoplasm. The enzyme catalyses (S)-4-amino-5-oxopentanoate = 5-aminolevulinate. The protein operates within porphyrin-containing compound metabolism; protoporphyrin-IX biosynthesis; 5-aminolevulinate from L-glutamyl-tRNA(Glu): step 2/2. Its pathway is porphyrin-containing compound metabolism; chlorophyll biosynthesis. The sequence is that of Glutamate-1-semialdehyde 2,1-aminomutase from Chloroflexus aurantiacus (strain ATCC 29366 / DSM 635 / J-10-fl).